We begin with the raw amino-acid sequence, 285 residues long: Eukaryotic translation initiation factor 2 subunit beta (285 aa).

The disordered stretch occupies residues 30-69; it reads DAAVNGKENGSGDDLFAGLKKKKKKSKSVSADAEAEKEPT. A Phosphoserine modification is found at Ser-40. Thr-69 bears the Phosphothreonine mark. Residues Ser-80, Ser-92, and Ser-112 each carry the phosphoserine modification. Position 116 is a phosphothreonine (Thr-116). Ser-118 is subject to Phosphoserine. The C4-type zinc-finger motif lies at 236-262; the sequence is CKTCKSINTELKREQSNRLFFMVCKSC.

It belongs to the eIF-2-beta/eIF-5 family. As to quaternary structure, eukaryotic translation initiation factor 2 eIF2 is a heterotrimeric complex composed of an alpha, a beta and a gamma subunit. The factors eIF-1, eIF-2, eIF-3, TIF5/eIF-5 and methionyl-tRNAi form a multifactor complex (MFC) that may bind to the 40S ribosome. Interacts with GCD6. Interacts with GCD1. Interacts with TIF5/eIF-5. Interacts with CDC123.

The protein resides in the cytoplasm. It localises to the cytosol. Functionally, component of the eIF2 complex that functions in the early steps of protein synthesis by forming a ternary complex with GTP and initiator tRNA. This complex binds to a 40S ribosomal subunit, followed by mRNA binding to form a 43S pre-initiation complex (43S PIC). Junction of the 60S ribosomal subunit to form the 80S initiation complex is preceded by hydrolysis of the GTP bound to eIF2 and release of an eIF2-GDP binary complex. In order for eIF2 to recycle and catalyze another round of initiation, the GDP bound to eIF2 must exchange with GTP by way of a reaction catalyzed by eIF2B. The chain is Eukaryotic translation initiation factor 2 subunit beta (SUI3) from Saccharomyces cerevisiae (strain ATCC 204508 / S288c) (Baker's yeast).